Consider the following 149-residue polypeptide: D-aminoacyl-tRNA deacylase (149 aa).

The Gly-cisPro motif, important for rejection of L-amino acids signature appears at glycine 137–proline 138.

This sequence belongs to the DTD family. As to quaternary structure, homodimer.

It localises to the cytoplasm. The catalysed reaction is glycyl-tRNA(Ala) + H2O = tRNA(Ala) + glycine + H(+). It carries out the reaction a D-aminoacyl-tRNA + H2O = a tRNA + a D-alpha-amino acid + H(+). Its function is as follows. An aminoacyl-tRNA editing enzyme that deacylates mischarged D-aminoacyl-tRNAs. Also deacylates mischarged glycyl-tRNA(Ala), protecting cells against glycine mischarging by AlaRS. Acts via tRNA-based rather than protein-based catalysis; rejects L-amino acids rather than detecting D-amino acids in the active site. By recycling D-aminoacyl-tRNA to D-amino acids and free tRNA molecules, this enzyme counteracts the toxicity associated with the formation of D-aminoacyl-tRNA entities in vivo and helps enforce protein L-homochirality. This Alkaliphilus metalliredigens (strain QYMF) protein is D-aminoacyl-tRNA deacylase.